We begin with the raw amino-acid sequence, 341 residues long: HTH-type transcriptional repressor PurR (341 aa).

The region spanning 2-56 (ATIKDVAKRANVSTTTVSHVINKTRFVAEETRNAVWAAIKELHYSPSAVARSLKV) is the HTH lacI-type domain. Positions 4-23 (IKDVAKRANVSTTTVSHVIN) form a DNA-binding region, H-T-H motif. The DNA-binding element occupies 48-56 (SAVARSLKV). Positions 73, 190, 192, 221, and 275 each coordinate hypoxanthine.

In terms of assembly, homodimer.

It participates in purine metabolism; purine nucleotide biosynthesis [regulation]. In terms of biological role, is the main repressor of the genes involved in the de novo synthesis of purine nucleotides, regulating purB, purC, purEK, purF, purHD, purL, purMN and guaBA expression. PurR is allosterically activated to bind its cognate DNA by binding the purine corepressors, hypoxanthine or guanine, thereby effecting transcription repression. The polypeptide is HTH-type transcriptional repressor PurR (Salmonella typhi).